The primary structure comprises 64 residues: Alpha-like toxin Lqh6 (64 aa).

The LCN-type CS-alpha/beta domain maps to 2 to 63; sequence RDGYIAQPEN…GIIVDGVKCH (62 aa). 4 cysteine pairs are disulfide-bonded: Cys-12/Cys-62, Cys-16/Cys-34, Cys-20/Cys-44, and Cys-24/Cys-46. Lys-64 bears the Lysine amide mark.

It belongs to the long (4 C-C) scorpion toxin superfamily. Sodium channel inhibitor family. Alpha subfamily. As to expression, expressed by the venom gland.

Its subcellular location is the secreted. Alpha toxins bind voltage-independently at site-3 of sodium channels (Nav) and inhibit the inactivation of the activated channels, thereby blocking neuronal transmission. This toxin is highly toxic to insects and mice, and inhibits the binding of alpha-toxin to cockroach neuronal membranes. This Leiurus hebraeus (Hebrew deathstalker scorpion) protein is Alpha-like toxin Lqh6.